A 120-amino-acid chain; its full sequence is Aspartate 1-decarboxylase (120 aa).

Ser-25 functions as the Schiff-base intermediate with substrate; via pyruvic acid in the catalytic mechanism. Ser-25 carries the pyruvic acid (Ser) modification. Thr-57 is a binding site for substrate. The active-site Proton donor is the Tyr-58. Residue 73-75 (GAA) coordinates substrate.

This sequence belongs to the PanD family. Heterooctamer of four alpha and four beta subunits. It depends on pyruvate as a cofactor. Is synthesized initially as an inactive proenzyme, which is activated by self-cleavage at a specific serine bond to produce a beta-subunit with a hydroxyl group at its C-terminus and an alpha-subunit with a pyruvoyl group at its N-terminus.

Its subcellular location is the cytoplasm. The catalysed reaction is L-aspartate + H(+) = beta-alanine + CO2. Its pathway is cofactor biosynthesis; (R)-pantothenate biosynthesis; beta-alanine from L-aspartate: step 1/1. Catalyzes the pyruvoyl-dependent decarboxylation of aspartate to produce beta-alanine. This chain is Aspartate 1-decarboxylase, found in Deinococcus geothermalis (strain DSM 11300 / CIP 105573 / AG-3a).